The primary structure comprises 1233 residues: STE20-like serine/threonine-protein kinase (1233 aa).

At serine 14 the chain carries Phosphoserine. One can recognise a Protein kinase domain in the interval 34–292 (WEIIGELGDG…TSQLLQHPFV (259 aa)). ATP-binding positions include 40–48 (LGDGAFGKV) and lysine 63. The active-site Proton acceptor is the aspartate 155. The residue at position 183 (threonine 183) is a Phosphothreonine. Serine 189 is subject to Phosphoserine. A disordered region spans residues 309–351 (AEVTEEVEDGKEEDEEEEAENALPIPANKRASSDLSIASSEED). The segment covering 312-328 (TEEVEDGKEEDEEEEAE) has biased composition (acidic residues). Residues serine 340, serine 341, serine 344, serine 347, serine 348, serine 354, and serine 372 each carry the phosphoserine modification. Residues 363-399 (VSERTEQSTSEDKFSNKILNEKPTTDGPEKAVDEHAS) show a composition bias toward basic and acidic residues. 4 disordered regions span residues 363-453 (VSER…ENNR), 498-650 (VSQE…SIEE), 663-761 (ALGS…SGDL), and 772-791 (AKDSGSVSLQETRRQKKTLK). A compositionally biased stretch (polar residues) spans 432 to 441 (PDTQDQQTVD). Positions 518-529 (LTKEETQEKLGK) are enriched in basic and acidic residues. Phosphoserine occurs at positions 543, 561, and 566. Over residues 598-607 (GGERVEDKQP) the composition is skewed to basic and acidic residues. The span at 619–630 (QLTSTSETTRAT) shows a compositional bias: polar residues. Phosphoserine is present on residues serine 643, serine 647, and serine 666. Residues 690 to 701 (AESQAPAASQPS) show a composition bias toward low complexity. A compositionally biased stretch (polar residues) spans 746-761 (TDSGTGSTVENSSGDL). Serine 775 and serine 777 each carry phosphoserine. Position 812 is a phosphothreonine (threonine 812). Residue serine 816 is modified to Phosphoserine. Positions 824–1067 (LRRQELRELR…LKNRQTQERA (244 aa)) form a coiled coil. In terms of domain architecture, UVR spans 873–908 (DQEIENLEKQQKQTIERLEQEHTNRLRDEAKRIKGE). Residues 944–963 (KRRKEELAQSQHAQEQEFVQ) form a disordered region. Residues 954 to 963 (QHAQEQEFVQ) are compositionally biased toward low complexity. Phosphothreonine is present on threonine 1095. Positions 1107-1181 (AAQEEKRQKN…ELKEWREKLR (75 aa)) form a coiled coil. A disordered region spans residues 1109-1129 (QEEKRQKNERMAQHQKHESQM).

The protein belongs to the protein kinase superfamily. STE Ser/Thr protein kinase family. STE20 subfamily. Proteolytically cleaved by caspase-3. Post-translationally, autophosphorylated. As to expression, ubiquitously expressed.

It localises to the cytoplasm. It catalyses the reaction L-seryl-[protein] + ATP = O-phospho-L-seryl-[protein] + ADP + H(+). The catalysed reaction is L-threonyl-[protein] + ATP = O-phospho-L-threonyl-[protein] + ADP + H(+). Its function is as follows. Mediates apoptosis and actin stress fiber dissolution. The protein is STE20-like serine/threonine-protein kinase (Slk) of Mus musculus (Mouse).